The following is a 398-amino-acid chain: Phospholipase C (398 aa).

The N-terminal stretch at M1–A28 is a signal peptide. Residues W29, H39, D84, H96, H154, D158, H164, H176, and E180 each coordinate Zn(2+). A Zn-dependent PLC domain is found at W29–S278. A linker region spans residues N275 to V283. The region spanning K284–K398 is the PLAT domain. Positions 297, 299, 300, 301, 321, 322, 324, 325, 326, 364, and 365 each coordinate Ca(2+).

This sequence belongs to the bacterial zinc-metallophospholipase C family. It depends on Ca(2+) as a cofactor. Zn(2+) is required as a cofactor.

It localises to the secreted. It catalyses the reaction a 1,2-diacyl-sn-glycero-3-phosphocholine + H2O = phosphocholine + a 1,2-diacyl-sn-glycerol + H(+). Bacterial hemolysins are exotoxins that attack blood cell membranes and cause cell rupture. Constitutes an essential virulence factor in gas gangrene. Binds to eukaryotic membranes where it hydrolyzes both phosphatidylcholine and sphingomyelin. The diacylglycerol produced can activate both the arachidonic acid pathway, leading to modulation of the inflammatory response cascade and thrombosis, and protein kinase C, leading to activation of eukaryotic phospholipases and further membrane damage. Acts on human and mouse erythrocytes, but not on rabbit or horse erythrocytes. The polypeptide is Phospholipase C (plc) (Clostridium perfringens (strain 13 / Type A)).